A 146-amino-acid chain; its full sequence is Lysozyme C (146 aa).

An N-terminal signal peptide occupies residues 1–16 (SGKYISWEDSCSYLQL). The region spanning 17–146 (QKYERCELAK…LSQWTQGCKL (130 aa)) is the C-type lysozyme domain. Cystine bridges form between C22/C144, C46/C132, C81/C97, and C93/C111. Catalysis depends on residues E51 and D69.

This sequence belongs to the glycosyl hydrolase 22 family. In terms of tissue distribution, expressed by the skin glands.

It is found in the secreted. It carries out the reaction Hydrolysis of (1-&gt;4)-beta-linkages between N-acetylmuramic acid and N-acetyl-D-glucosamine residues in a peptidoglycan and between N-acetyl-D-glucosamine residues in chitodextrins.. In terms of biological role, lysozymes have primarily a bacteriolytic function; those in tissues and body fluids are associated with the monocyte-macrophage system and enhance the activity of immunoagents. Has antibacterial activity against the Gram-positive bacterium S.aureus and against the Gram-negative bacterium E.coli with a MIC of 1 uM and 8 uM respectively. No antifungal activity against C.albicans. In Bufo gargarizans andrewsi (Andrew's toad), this protein is Lysozyme C.